We begin with the raw amino-acid sequence, 1843 residues long: Nonribosomal peptide synthetase SIDD (1843 aa).

Residues 1 to 83 (MLSIDDHGGG…QQQQQQQQRS (83 aa)) form a disordered region. A compositionally biased stretch (low complexity) spans 65 to 81 (QQQQQQQQQQQQQQQQQ). The adenylation 1 stretch occupies residues 133-528 (TYSELEHLST…TEVEHHIQTC (396 aa)). Positions 628 to 647 (KLGATHADEGPQEEPETDAE) are disordered. Residues 641–716 (EPETDAEKKL…AMANKSTSIS (76 aa)) enclose the Carrier 1 domain. O-(pantetheine 4'-phosphoryl)serine is present on S677. The condensation 1 stretch occupies residues 753–1175 (VEDVYPCTPL…ALSDDDAAAL (423 aa)). Residues 1289–1365 (SATSQRQRRL…EMAAVMECTD (77 aa)) form the Carrier 2 domain. S1326 is subject to O-(pantetheine 4'-phosphoryl)serine. The condensation 2 stretch occupies residues 1447-1734 (FFDGPVDLRR…LREIAENCGL (288 aa)).

It belongs to the NRP synthetase family. Pantetheine 4'-phosphate is required as a cofactor.

It participates in siderophore biosynthesis. Nonribosomal peptide synthetase; part of the gene cluster that mediates the biosynthesis of at least 11 siderophores, including beauverichelin A, dimerumic acid (DA), Na-dimethyl coprogen (NADC), eleutherazine B, ferricrocin (FC), fusarinine A, fusarinine C (FsC), metachelin A, mevalonolactone, rhodotorulic acid (RA) and tenellin. This cocktail of siderophores for iron metabolism is essential for virulence, and more specifically for the fungal virulence in penetrating through the host cuticle. Siderophore synthesis is also involved in conidial germination under iron-deficient conditions. SIDC catalyzes the assembly of ferricrocin whereas SIDD catalyzes the assembly of fusarinine C. The polypeptide is Nonribosomal peptide synthetase SIDD (Beauveria bassiana (strain ARSEF 2860) (White muscardine disease fungus)).